Reading from the N-terminus, the 146-residue chain is [Ribosomal protein bS18]-alanine N-acetyltransferase (146 aa).

The 145-residue stretch at 2 to 146 (SIISQIEACD…ENAVVMACYL (145 aa)) folds into the N-acetyltransferase domain. An acetyl-CoA-binding site is contributed by 69 to 71 (IAI). Glutamate 103 serves as the catalytic Proton acceptor. Asparagine 108 lines the acetyl-CoA pocket. The Proton donor role is filled by tyrosine 114.

Belongs to the acetyltransferase family. RimI subfamily.

The protein localises to the cytoplasm. It carries out the reaction N-terminal L-alanyl-[ribosomal protein bS18] + acetyl-CoA = N-terminal N(alpha)-acetyl-L-alanyl-[ribosomal protein bS18] + CoA + H(+). Its function is as follows. Acetylates the N-terminal alanine of ribosomal protein bS18. This is [Ribosomal protein bS18]-alanine N-acetyltransferase from Haemophilus influenzae (strain ATCC 51907 / DSM 11121 / KW20 / Rd).